The following is a 244-amino-acid chain: Uridylate kinase (244 aa).

15–18 (KLSG) provides a ligand contact to ATP. Residues 23–28 (GSEGFG) are involved in allosteric activation by GTP. UMP is bound at residue G57. Positions 58 and 62 each coordinate ATP. UMP-binding positions include D77 and 138–145 (TGNPFFTT). Residues T165, F171, and D174 each coordinate ATP.

Belongs to the UMP kinase family. In terms of assembly, homohexamer.

It is found in the cytoplasm. The catalysed reaction is UMP + ATP = UDP + ADP. It participates in pyrimidine metabolism; CTP biosynthesis via de novo pathway; UDP from UMP (UMPK route): step 1/1. With respect to regulation, allosterically activated by GTP. Inhibited by UTP. Functionally, catalyzes the reversible phosphorylation of UMP to UDP. In Aeromonas salmonicida (strain A449), this protein is Uridylate kinase.